Consider the following 383-residue polypeptide: Pantothenate kinase 1 (383 aa).

The protein belongs to the type II pantothenate kinase family. In terms of tissue distribution, highly expressed in leaves and developing seeds. Expressed in roots, stems and flowers.

It catalyses the reaction (R)-pantothenate + ATP = (R)-4'-phosphopantothenate + ADP + H(+). The protein operates within cofactor biosynthesis; coenzyme A biosynthesis; CoA from (R)-pantothenate: step 1/5. With respect to regulation, regulated by feedback inhibition by malonyl-CoA. Catalyzes the phosphorylation of pantothenate the first step in CoA biosynthesis. May play a role in the physiological regulation of the intracellular CoA concentration. Functionally redudant with PANK2. This Arabidopsis thaliana (Mouse-ear cress) protein is Pantothenate kinase 1 (PANK1).